The chain runs to 612 residues: MSKVIGIDLGTTNSCVAVMEGGEAVVIPNAEGGRTTPSVVAFTKEGERIVGQVAKRQAITNPDRTVISIKRHMGTNYKVKIDNKEYTPQEISAMILQKLKADAEAYLGEKVTQAVITVPAYFTDSQRQATKDAGRIAGLEVLRIINEPTAASLAYGLDKGEDQTILVYDLGGGTFDVSILELGDGVFEVKATSGNNRLGGDDFDQRIMDYLVDICRREHGVDLTQDKMAMQRLKEAAEKAKIELSGMTSTNINLPFISATPNGPVHLDVNLTRAKFEELIADLVEKTVGPTRQALADAGLEPKDIDKVLLVGGSTRVPLVQETVRKILGQEPHKGINPDECVALGAAIQGGVLAGEVKDVLLLDVTPLSLGIETLGGVFTKLIERNTTIPTSKSQIFSTAADNQTTVEIHVLQGERAMAADNKTLGRFQLTGIPPAPRGVPQIEVKFDIDANGIVHVSAKDLGTGKQQAITITSSSGLSEEEIQRMVKEAEASAEADRRRKEEIETRNQADSLIYQAERTLKEFKDKADQNDVDRIEKAKKELQEVLDSKNNDKIKEKMEALSQALYTLTTKVYQQAGAQAGAQGQGAAGGQKQDGNVYDADYKVVDDDKKE.

Phosphothreonine; by autocatalysis is present on Thr174. The disordered stretch occupies residues 578-612; sequence GAQAGAQGQGAAGGQKQDGNVYDADYKVVDDDKKE. The segment covering 601-612 has biased composition (basic and acidic residues); the sequence is ADYKVVDDDKKE.

This sequence belongs to the heat shock protein 70 family.

Functionally, acts as a chaperone. In Moorella thermoacetica (strain ATCC 39073 / JCM 9320), this protein is Chaperone protein DnaK.